A 171-amino-acid polypeptide reads, in one-letter code: Tetratricopeptide repeat protein 9C (171 aa).

3 TPR repeats span residues 8–41 (AQLYKEEGNQRYREGKYRDAVSRYHRALLQLRGL), 72–107 (TDCYNNLAACLLQMEPVNYERVREYSQKVLERQPDN), and 108–141 (AKALYRAGVAFFHLQDYDQARHYLLAAVNRQPKD).

It belongs to the TTC9 family.

This is Tetratricopeptide repeat protein 9C (TTC9C) from Homo sapiens (Human).